Here is an 88-residue protein sequence, read N- to C-terminus: Small ribosomal subunit protein uS17 (88 aa).

It belongs to the universal ribosomal protein uS17 family. In terms of assembly, part of the 30S ribosomal subunit.

In terms of biological role, one of the primary rRNA binding proteins, it binds specifically to the 5'-end of 16S ribosomal RNA. The chain is Small ribosomal subunit protein uS17 from Vesicomyosocius okutanii subsp. Calyptogena okutanii (strain HA).